A 453-amino-acid polypeptide reads, in one-letter code: MIGIVVSRADGASTHIWAQLREIEDFERIGPDAYRADGIEVRVFEELHTTIDDAADAFEAAVDMVVVVSRHSGDTGPLLSAHYTGNFGAAEYGGADRSVAPACPNAHHAVVDSLRSYAPPEYDVAMECTHHGPTSVGAPSMFVELGSSPAEWQDDAGARAVARAVRDLRGVPPHGDRAVVVFGGGHYTPRATRILADTDWPVGHVAADWSLTELGRPNAHRGVVDAMFTASGAAHALVEGDRPELTETIRDLGYTVVSETWVRETDGVPLSRVAALEESLTTVDDGLRFGEPAATHTGGYLVVELPDAVLDAAHAVDTAATVAAGRSHALAVTTVNAGRRLAGSAAFPDADAYEAFVDDVAAVLNAEYASVSRADGELTATREVFDPEAAAALGVPEGPAFGRLAGGEAIEHDGRTIAPAAVTSTETVRADVALHERPRERVRRPSDDEGKGN.

The disordered stretch occupies residues 428 to 453 (VRADVALHERPRERVRRPSDDEGKGN).

This sequence belongs to the DtdA deacylase family. In terms of assembly, monomer. Requires Zn(2+) as cofactor.

The enzyme catalyses a D-aminoacyl-tRNA + H2O = a tRNA + a D-alpha-amino acid + H(+). It carries out the reaction glycyl-tRNA(Ala) + H2O = tRNA(Ala) + glycine + H(+). Functionally, D-aminoacyl-tRNA deacylase with broad substrate specificity. By recycling D-aminoacyl-tRNA to D-amino acids and free tRNA molecules, this enzyme counteracts the toxicity associated with the formation of D-aminoacyl-tRNA entities in vivo. In Halobacterium salinarum (strain ATCC 29341 / DSM 671 / R1), this protein is D-aminoacyl-tRNA deacylase.